The sequence spans 625 residues: Inactive glucose-6-phosphate 1-dehydrogenase 4, chloroplastic (625 aa).

The N-terminal 49 residues, 1-49 (MSLSSCLLPFSQSATAPSSSVCSCHLAASFSNFPVSSRDYSFSRSGSLV), are a transit peptide targeting the chloroplast. Residues 160–167 (GATGELAR) and Arg194 contribute to the NADP(+) site. The cysteines at positions 212 and 220 are disulfide-linked. Position 297 (Lys297) interacts with NADP(+). D-glucose 6-phosphate is bound by residues Lys297, 327-331 (HMLGR), Glu365, and Asp382. The Proton acceptor role is filled by His387. The NADP(+) site is built by Arg471, Arg480, Arg513, and Arg606.

The protein belongs to the glucose-6-phosphate dehydrogenase family. Forms homodimer. Interacts with G6PD1. As to expression, expressed in leaves, stems and buds.

It localises to the plastid. It is found in the chloroplast stroma. Functionally, seems to be a catalytically inactive enzyme. This Arabidopsis thaliana (Mouse-ear cress) protein is Inactive glucose-6-phosphate 1-dehydrogenase 4, chloroplastic.